We begin with the raw amino-acid sequence, 804 residues long: Probable cadmium-transporting ATPase (804 aa).

HMA domains are found at residues 11–74 (DKQV…LKVA) and 89–152 (DKNV…LKVI). Residues Cys22, Cys25, Cys100, and Cys103 each coordinate Cd(2+). 5 helical membrane passes run 183–203 (STLL…FVNG), 207–227 (LVTS…LFKV), 248–268 (IGAA…LFAI), 413–433 (IIMV…GGSW), and 441–461 (LAVL…ISIV). Asp492 (4-aspartylphosphate intermediate) is an active-site residue. Helical transmembrane passes span 749-771 (LNII…LLVI) and 776-798 (TLWI…SLRL).

It belongs to the cation transport ATPase (P-type) (TC 3.A.3) family. Type IB subfamily.

It is found in the cell membrane. The enzyme catalyses Cd(2+)(in) + ATP + H2O = Cd(2+)(out) + ADP + phosphate + H(+). Functionally, couples the hydrolysis of ATP with the export of cadmium. Involved in cadmium resistance. This chain is Probable cadmium-transporting ATPase (cadA), found in Staphylococcus aureus.